Consider the following 683-residue polypeptide: Cytochrome P450 monooxygenase htyF (683 aa).

A helical membrane pass occupies residues Pro8 to Leu28. N-linked (GlcNAc...) asparagine glycosylation occurs at Asn29. Cys481 is a heme binding site. N-linked (GlcNAc...) asparagine glycosylation is present at Asn581. Residues Leu588 to Tyr608 form a helical membrane-spanning segment.

The protein belongs to the cytochrome P450 family. Heme serves as cofactor.

The protein localises to the membrane. Its pathway is antifungal biosynthesis. In terms of biological role, cytochrome P450 monooxygenase; part of the gene cluster that mediates the de novo generation of L-homotyrosine from acetyl-CoA and 4-hydroxyphenyl-pyruvate. L-homotyrosine is a building block of echinocandin B, a fungal lipidated cyclic hexapeptide that acts as an antifungal agent. L-homotyrosine 4-hydroxyphenyl-pyruvate first undergoes an aldol-type condensation by htyA with the C-2 of acetyl-CoA followed by the release of CoA to form 2-(4-hydroxybenzyl)-malate. This is followed by isomerization of 2-(4-hydroxy-benzyl)-malate to 3-(4-hydroxybenzyl)-malate by htyD. Thereafter, 3-(4-hydroxybenzyl)-malate undergoes decarboxylation and oxidation to form 2-oxo-4-(4-hydroxybenzyl)butanoic acid, coupled to reduction of NAD(+) to NADH by htyC. The product then undergoes transamination catalyzed by htyB to form L-homotyrosine. In Aspergillus rugulosus (Emericella rugulosa), this protein is Cytochrome P450 monooxygenase htyF.